The primary structure comprises 166 residues: UPF0304 protein VIBHAR_01542 (166 aa).

It belongs to the UPF0304 family.

The sequence is that of UPF0304 protein VIBHAR_01542 from Vibrio campbellii (strain ATCC BAA-1116).